The following is a 180-amino-acid chain: Large ribosomal subunit protein uL5 (180 aa).

This sequence belongs to the universal ribosomal protein uL5 family. In terms of assembly, part of the 50S ribosomal subunit; part of the 5S rRNA/L5/L18/L25 subcomplex. Contacts the 5S rRNA and the P site tRNA. Forms a bridge to the 30S subunit in the 70S ribosome.

Its function is as follows. This is one of the proteins that bind and probably mediate the attachment of the 5S RNA into the large ribosomal subunit, where it forms part of the central protuberance. In the 70S ribosome it contacts protein S13 of the 30S subunit (bridge B1b), connecting the 2 subunits; this bridge is implicated in subunit movement. Contacts the P site tRNA; the 5S rRNA and some of its associated proteins might help stabilize positioning of ribosome-bound tRNAs. This Mycoplasma mycoides subsp. mycoides SC (strain CCUG 32753 / NCTC 10114 / PG1) protein is Large ribosomal subunit protein uL5.